Here is a 57-residue protein sequence, read N- to C-terminus: Potassium channel toxin alpha-KTx 8.8 (57 aa).

An N-terminal signal peptide occupies residues 1 to 19; sequence MCRLYAIILIVLVMNVIMT. A propeptide spanning residues 20–28 is cleaved from the precursor; it reads IIPDSKVEV. Intrachain disulfides connect C31-C47, C34-C52, and C38-C54.

It belongs to the short scorpion toxin superfamily. Potassium channel inhibitor family. Alpha-KTx 08 subfamily. In terms of processing, contains 3 disulfide bonds. In terms of tissue distribution, expressed by the venom gland.

The protein localises to the secreted. Functionally, selectively inhibits voltage-gated potassium channels rKv1.2/KCNA2 (IC(50)=331 nM) and hKv1.3/KCNA3 (IC(50)=503 nM). Partially inihibts rKv1.6/KCNA6 (IC(50)=9983 nM). The sequence is that of Potassium channel toxin alpha-KTx 8.8 from Orthochirus scrobiculosus (Central Asian scorpion).